The chain runs to 700 residues: Polyribonucleotide nucleotidyltransferase (700 aa).

Residues D491 and D497 each coordinate Mg(2+). A KH domain is found at 558-617 (PNYAVIEINPDKIRDVIGKGGATIRQLTEETGAVIDIDDAGTIRIFGENKAATKAAIAKI). The region spanning 627 to 695 (GKTYEGTVAR…NRGRIKLTMK (69 aa)) is the S1 motif domain.

The protein belongs to the polyribonucleotide nucleotidyltransferase family. Component of the RNA degradosome, which is a multiprotein complex involved in RNA processing and mRNA degradation. Mg(2+) serves as cofactor.

Its subcellular location is the cytoplasm. The catalysed reaction is RNA(n+1) + phosphate = RNA(n) + a ribonucleoside 5'-diphosphate. In terms of biological role, involved in mRNA degradation. Catalyzes the phosphorolysis of single-stranded polyribonucleotides processively in the 3'- to 5'-direction. The protein is Polyribonucleotide nucleotidyltransferase of Psychrobacter arcticus (strain DSM 17307 / VKM B-2377 / 273-4).